We begin with the raw amino-acid sequence, 704 residues long: Meprin A subunit beta (704 aa).

A signal peptide spans methionine 1–glycine 20. The propeptide occupies leucine 21 to serine 64. Topologically, residues leucine 21–aspartate 654 are extracellular. In terms of domain architecture, Peptidase M12A spans asparagine 63–threonine 257. 3 disulfide bridges follow: cysteine 104-cysteine 256, cysteine 125-cysteine 145, and cysteine 266-cysteine 428. Histidine 153 contacts Zn(2+). Residue glutamate 154 is part of the active site. Zn(2+)-binding residues include histidine 157 and histidine 163. Residues asparagine 193, asparagine 219, asparagine 255, asparagine 316, asparagine 422, asparagine 437, asparagine 529, asparagine 548, and asparagine 593 are each glycosylated (N-linked (GlcNAc...) asparagine). The 170-residue stretch at serine 261–histidine 430 folds into the MAM domain. Positions histidine 431–valine 586 constitute an MATH domain. The 41-residue stretch at valine 607–glutamate 647 folds into the EGF-like domain. Disulfide bonds link cysteine 611–cysteine 622, cysteine 616–cysteine 631, and cysteine 633–cysteine 646. A helical transmembrane segment spans residues threonine 655–valine 678. At tyrosine 679–phenylalanine 704 the chain is on the cytoplasmic side. A Phosphothreonine modification is found at threonine 697.

Homotetramer consisting of disulfide-linked beta subunits, or heterotetramer of two alpha and two beta subunits formed by non-covalent association of two disulfide-linked heterodimers. Interacts with MBL2 through its carbohydrate moiety. This interaction may inhibit its catalytic activity. Interacts with TSPAN8. Zn(2+) serves as cofactor. In terms of processing, proteolytically activated by trypsin in the intestinal lumen and kallikrein-related peptidases in other tissues. N-glycosylated; contains high mannose and/or complex biantennary structures. Post-translationally, phosphorylated by PKC at multiple sites of its cytoplasmic part. Phosphorylation dcreases activity at the cell surface, leading to diminished substrate cleavage. Isoform 1 is expressed in kidney, intestinal brush borders, and salivary ducts. Isoform 2 has been found in carcinoma cells.

It localises to the cell membrane. The protein resides in the secreted. The catalysed reaction is Hydrolysis of proteins, including azocasein, and peptides. Hydrolysis of 5-His-|-Leu-6, 6-Leu-|-Cys-7, 14-Ala-|-Leu-15 and 19-Cys-|-Gly-20 bonds in insulin B chain.. Strongly inhibited by fetuin-A/AHSG. Inhibited by cysteine and by the metal ion chelators EDTA and 1,10-phenanthroline. Not inhibited by 3,4-dichloroisocourmarin, soybean trypsin inhibitor, or the cysteine proteinase inhibitors iodoacetic acid and E-64. In terms of biological role, membrane metallopeptidase that sheds many membrane-bound proteins. Exhibits a strong preference for acidic amino acids at the P1' position. Known substrates include: FGF19, VGFA, IL1B, IL18, procollagen I and III, E-cadherin, KLK7, gastrin, ADAM10, tenascin-C. The presence of several pro-inflammatory cytokine among substrates implicate MEP1B in inflammation. It is also involved in tissue remodeling due to its capability to degrade extracellular matrix components. The polypeptide is Meprin A subunit beta (Mep1b) (Mus musculus (Mouse)).